The chain runs to 517 residues: Bifunctional purine biosynthesis protein PurH (517 aa).

An MGS-like domain is found at 1 to 146; sequence MGRLVLLSVS…KNFAHLTVLC (146 aa).

The protein belongs to the PurH family.

The enzyme catalyses (6R)-10-formyltetrahydrofolate + 5-amino-1-(5-phospho-beta-D-ribosyl)imidazole-4-carboxamide = 5-formamido-1-(5-phospho-D-ribosyl)imidazole-4-carboxamide + (6S)-5,6,7,8-tetrahydrofolate. The catalysed reaction is IMP + H2O = 5-formamido-1-(5-phospho-D-ribosyl)imidazole-4-carboxamide. Its pathway is purine metabolism; IMP biosynthesis via de novo pathway; 5-formamido-1-(5-phospho-D-ribosyl)imidazole-4-carboxamide from 5-amino-1-(5-phospho-D-ribosyl)imidazole-4-carboxamide (10-formyl THF route): step 1/1. It participates in purine metabolism; IMP biosynthesis via de novo pathway; IMP from 5-formamido-1-(5-phospho-D-ribosyl)imidazole-4-carboxamide: step 1/1. The protein is Bifunctional purine biosynthesis protein PurH of Gloeothece citriformis (strain PCC 7424) (Cyanothece sp. (strain PCC 7424)).